The following is a 2303-amino-acid chain: Adenomatous polyposis coli protein 2 (2303 aa).

Residues 8-59 (YEQLVRQVEALKAENSHLRQELRDNSSHLSKLETETSGMKEVLKHLQGKLEQ) are a coiled coil. Disordered stretches follow at residues 94–120 (PTLG…KDSF) and 247–270 (VPVD…QPGN). ARM repeat units follow at residues 302 to 341 (PESC…PGAK), 479 to 518 (ANKA…NLSW), 522 to 562 (INSK…NLSA), 566 to 609 (ENKA…NVSS), 615 to 654 (EDYR…NLSA), and 657 to 696 (ARDQ…NLLA). Disordered stretches follow at residues 744 to 764 (KQGP…LRHL) and 816 to 835 (LART…DTSG). A compositionally biased stretch (basic and acidic residues) spans 825-834 (GGKEAEKDTS). Residues 840-864 (AAKAKAKLALAVARIDQLVEDISAL) adopt a coiled-coil conformation. Disordered regions lie at residues 867–908 (SSDD…AGSR), 953–986 (RRED…ATSA), 1069–1152 (RCSS…ENYV), and 1173–1228 (SPSI…EATQ). Over residues 869–878 (DDSFSLSSGD) the composition is skewed to low complexity. Repeat 1 spans residues 1058–1077 (LAAQEGPLSLSRCSSLSSLS). The 5 X 20 AA approximate repeat of F-X-V-E-X-T-P-X-C-F-S-R-X-S-S-L-S-S-L-S stretch occupies residues 1058–1587 (LAAQEGPLSL…SLSSSASSLS (530 aa)). The segment at 1058–1587 (LAAQEGPLSL…SLSSSASSLS (530 aa)) is interaction with CTNNB1. Residues 1069-1084 (RCSSLSSLSSAGRPGP) are compositionally biased toward low complexity. The span at 1088–1101 (GDLDDSDSSLEGLE) shows a compositional bias: acidic residues. Polar residues predominate over residues 1143–1152 (TPSSSSENYV). Repeat unit 2 spans residues 1150-1169 (NYVQETPLVLSRCSSVSSLG). The segment covering 1173–1186 (SPSIASSIPSEPCS) has biased composition (low complexity). Polar residues predominate over residues 1202–1212 (PGQTMPPSRSK). Repeat unit 3 spans residues 1263-1282 (FTVEKPDENFSCASSLSALA). Disordered regions lie at residues 1307–1335 (GAGG…PRGA), 1382–1497 (PAQE…QSLC), 1510–1684 (YGND…LDSV), 1724–2031 (LSVG…RGRP), and 2046–2232 (LRAA…DVDG). Residues 1390 to 1410 (TDSAEGTPVNFSSAASLSDET) are compositionally biased toward polar residues. Repeat unit 4 spans residues 1391 to 1410 (DSAEGTPVNFSSAASLSDET). Basic and acidic residues-rich tracts occupy residues 1477-1489 (ADKD…RTRG) and 1537-1548 (FTRERPQGRKEA). Residues 1568-1587 (LIADETPPCYSLSSSASSLS) form repeat 5. Positions 1578-1589 (SLSSSASSLSEP) are enriched in low complexity. Residues S1585 and S1587 each carry the phosphoserine modification. The segment covering 1638–1654 (PRRRPPVSGLRRRKPRA) has biased composition (basic residues). 2 stretches are compositionally biased toward basic and acidic residues: residues 1655–1671 (TRLD…RGEE) and 1739–1755 (RQAE…EKRG). Over residues 1819–1830 (APPCLAQPAAPA) the composition is skewed to low complexity. Positions 1821–1900 (PCLAQPAAPA…PPVTQAAGAL (80 aa)) are required for localization to microtubules and function in microtubule stabilization. Residues 1851–1860 (ELATLSQPPR) are compositionally biased toward polar residues. Low complexity-rich tracts occupy residues 1868–1886 (LAKT…SQPL), 1971–1984 (GLVR…SGSE), 2011–2026 (LSSA…GASP), 2049–2062 (APRQ…QRPP), and 2113–2123 (GAVPAAPASAD). Positions 2067–2144 (SPGERPARRT…PLPRVAAPGT (78 aa)) are interaction with MAPRE1 and MAPRE3. A compositionally biased stretch (basic and acidic residues) spans 2124-2135 (AARRSSDGEPRP). Residues 2200-2209 (KTNSSTSPSL) are compositionally biased toward polar residues.

This sequence belongs to the adenomatous polyposis coli (APC) family. Interacts with PSRC1. Interacts with APC. Interacts with CTNNB1. Interacts with MAPRE1 and MAPRE3. Interacts with TP53BP. Interacts possibly with AXIN2. In terms of tissue distribution, widely expressed (at protein level). Specifically expressed in the CNS.

The protein localises to the cytoplasm. The protein resides in the cytoskeleton. It is found in the golgi apparatus. Its subcellular location is the perinuclear region. Functionally, stabilizes microtubules and may regulate actin fiber dynamics through the activation of Rho family GTPases. May also function in Wnt signaling by promoting the rapid degradation of CTNNB1. This is Adenomatous polyposis coli protein 2 from Homo sapiens (Human).